Reading from the N-terminus, the 1358-residue chain is Phosphoinositide 3-kinase regulatory subunit 4 (1358 aa).

Residue Gly-2 is the site of N-myristoyl glycine attachment. The region spanning 26-324 (FEYDKSLGST…AFPEIFYTFL (299 aa)) is the Protein kinase domain. Residues 32 to 40 (LGSTRFFKV) and Lys-53 contribute to the ATP site. The active-site Proton acceptor is Asp-148. HEAT repeat units follow at residues 373-411 (NGLV…RLGV), 413-450 (ILLD…LVKE), 458-495 (IYPE…TALR), 531-570 (QALH…FFGR), 572-610 (KAND…YVGW), 612-648 (SSSI…LGLL), and 690-726 (DVYC…PVSR). Phosphoserine occurs at positions 808, 813, 853, and 865. A disordered region spans residues 875-899 (LPKGSDQEVIQTGKPPRSESSAGIC). WD repeat units lie at residues 991 to 1030 (EHKS…GKTT), 1040 to 1079 (RVGG…LPKS), 1093 to 1134 (KEDG…NAWT), 1139 to 1178 (LKSG…PISS), 1182 to 1223 (PSRA…RRFT), and 1237 to 1278 (PSPH…RSYV). Residues 1307–1326 (KQKVGPSDDTPRRGPESLPV) are disordered. Over residues 1315–1326 (DTPRRGPESLPV) the composition is skewed to basic and acidic residues. Residue Thr-1316 is modified to Phosphothreonine. One copy of the WD 7 repeat lies at 1327–1358 (GHHDIITDVATFQTTQGFIVTASRDGIVKVWK).

The protein belongs to the protein kinase superfamily. Ser/Thr protein kinase family. In terms of assembly, component of the PI3K (PI3KC3/PI3K-III/class III phosphatidylinositol 3-kinase) complex the core of which is composed of the catalytic subunit PIK3C3, the regulatory subunit PIK3R4 and BECN1 associating with additional regulatory/auxiliary subunits to form alternative complex forms. Alternative complex forms containing a fourth regulatory subunit in a mutually exclusive manner are PI3K complex I (PI3KC3-C1) containing ATG14, and PI3K complex II (PI3KC3-C2) containing UVRAG. PI3KC3-C1 displays a V-shaped architecture with PIK3R4 serving as a bridge between PIK3C3 and the ATG14:BECN1 subcomplex. Both, PI3KC3-C1 and PI3KC3-C2, can associate with further regulatory subunits, such as RUBCN, SH3GLB1/Bif-1, AMBRA1 and NRBF2. PI3KC3-C1 probably associates with PIK3CB. Interacts with RAB7A in the presence of PIK3C3/VPS34. Interacts with NRBF2. Interacts with ARMC3. Mn(2+) serves as cofactor. Myristoylated. Post-translationally, probably autophosphorylated.

Its subcellular location is the late endosome. It localises to the cytoplasmic vesicle. The protein localises to the autophagosome. It is found in the membrane. It catalyses the reaction L-seryl-[protein] + ATP = O-phospho-L-seryl-[protein] + ADP + H(+). The enzyme catalyses L-threonyl-[protein] + ATP = O-phospho-L-threonyl-[protein] + ADP + H(+). Regulatory subunit of the PI3K complex that mediates formation of phosphatidylinositol 3-phosphate; different complex forms are believed to play a role in multiple membrane trafficking pathways: PI3KC3-C1 is involved in initiation of autophagosomes and PI3KC3-C2 in maturation of autophagosomes and endocytosis. Involved in regulation of degradative endocytic trafficking and cytokinesis, probably in the context of PI3KC3-C2. In terms of biological role, regulatory subunit of the PI3K complex. May regulate membrane trafficking late in the endocytic pathway. The chain is Phosphoinositide 3-kinase regulatory subunit 4 (PIK3R4) from Pongo abelii (Sumatran orangutan).